A 37-amino-acid polypeptide reads, in one-letter code: Large ribosomal subunit protein bL36 (37 aa).

Belongs to the bacterial ribosomal protein bL36 family.

The polypeptide is Large ribosomal subunit protein bL36 (Micrococcus luteus (strain ATCC 4698 / DSM 20030 / JCM 1464 / CCM 169 / CCUG 5858 / IAM 1056 / NBRC 3333 / NCIMB 9278 / NCTC 2665 / VKM Ac-2230) (Micrococcus lysodeikticus)).